Reading from the N-terminus, the 167-residue chain is Large ribosomal subunit protein uL10 (167 aa).

This sequence belongs to the universal ribosomal protein uL10 family. In terms of assembly, part of the ribosomal stalk of the 50S ribosomal subunit. The N-terminus interacts with L11 and the large rRNA to form the base of the stalk. The C-terminus forms an elongated spine to which L12 dimers bind in a sequential fashion forming a multimeric L10(L12)X complex.

Its function is as follows. Forms part of the ribosomal stalk, playing a central role in the interaction of the ribosome with GTP-bound translation factors. This chain is Large ribosomal subunit protein uL10, found in Psychromonas ingrahamii (strain DSM 17664 / CCUG 51855 / 37).